The primary structure comprises 187 residues: Large ribosomal subunit protein uL5 (187 aa).

It belongs to the universal ribosomal protein uL5 family. As to quaternary structure, part of the 50S ribosomal subunit; part of the 5S rRNA/L5/L18/L25 subcomplex. Contacts the 5S rRNA and the P site tRNA. Forms a bridge to the 30S subunit in the 70S ribosome.

In terms of biological role, this is one of the proteins that bind and probably mediate the attachment of the 5S RNA into the large ribosomal subunit, where it forms part of the central protuberance. In the 70S ribosome it contacts protein S13 of the 30S subunit (bridge B1b), connecting the 2 subunits; this bridge is implicated in subunit movement. Contacts the P site tRNA; the 5S rRNA and some of its associated proteins might help stabilize positioning of ribosome-bound tRNAs. The polypeptide is Large ribosomal subunit protein uL5 (Mycobacterium leprae (strain Br4923)).